A 211-amino-acid chain; its full sequence is Riboflavin transporter RibU (211 aa).

The next 5 membrane-spanning stretches (helical) occupy residues 34–54 (AYIA…FPLI), 66–86 (ILPV…GVLL), 104–124 (IGLP…SYFW), 134–154 (ILGS…LNYI), and 180–200 (AMVV…FALI).

Belongs to the prokaryotic riboflavin transporter (P-RFT) (TC 2.A.87) family. In terms of assembly, forms a stable energy-coupling factor (ECF) transporter complex composed of 2 membrane-embedded substrate-binding proteins (S component), 2 ATP-binding proteins (A component) and 2 transmembrane proteins (T component) upon coexpression of the 4 components in E.coli.

The protein resides in the cell membrane. Functionally, substrate-binding (S) component of an energy-coupling factor (ECF) ABC-transporter complex. Mediates riboflavin uptake, may also transport FMN and roseoflavin. Probably a riboflavin-binding protein that interacts with the energy-coupling factor (ECF) ABC-transporter complex. Unlike classic ABC transporters this ECF transporter provides the energy necessary to transport a number of different substrates. The substrates themselves are bound by transmembrane, not extracytoplasmic soluble proteins. Expression of the complex plus RibU in E.coli allows riboflavin uptake. This chain is Riboflavin transporter RibU (ribU), found in Streptococcus thermophilus (strain ATCC BAA-250 / LMG 18311).